The sequence spans 419 residues: eIF5-mimic protein 1 (419 aa).

A disordered region spans residues 1–22 (MNKHQKPVLTGQRFKTRKRDEK). An N6-acetyllysine modification is found at Lys-117. The W2 domain maps to 248–415 (VQQSLGTRKE…QNAEEESESE (168 aa)). Residues Ser-412, Ser-414, and Ser-419 each carry the phosphoserine modification.

It belongs to the BZW family. As to quaternary structure, interacts with EIF3E, EIF2S2 and EIF3C.

The protein localises to the cytoplasm. In terms of biological role, translation initiation regulator which represses non-AUG initiated translation and repeat-associated non-AUG (RAN) initiated translation by acting as a competitive inhibitor of eukaryotic translation initiation factor 5 (EIF5) function. Increases the accuracy of translation initiation by impeding EIF5-dependent translation from non-AUG codons by competing with it for interaction with EIF2S2 within the 43S pre-initiation complex (PIC) in an EIF3C-binding dependent manner. This chain is eIF5-mimic protein 1 (Bzw2), found in Mus musculus (Mouse).